An 87-amino-acid polypeptide reads, in one-letter code: CRISPR-associated endoribonuclease Cas2 (87 aa).

Position 8 (aspartate 8) interacts with Mg(2+).

This sequence belongs to the CRISPR-associated endoribonuclease Cas2 protein family. Homodimer, forms a heterotetramer with a Cas1 homodimer. It depends on Mg(2+) as a cofactor.

CRISPR (clustered regularly interspaced short palindromic repeat), is an adaptive immune system that provides protection against mobile genetic elements (viruses, transposable elements and conjugative plasmids). CRISPR clusters contain sequences complementary to antecedent mobile elements and target invading nucleic acids. CRISPR clusters are transcribed and processed into CRISPR RNA (crRNA). Functions as a ssRNA-specific endoribonuclease. Involved in the integration of spacer DNA into the CRISPR cassette. This Methanosarcina acetivorans (strain ATCC 35395 / DSM 2834 / JCM 12185 / C2A) protein is CRISPR-associated endoribonuclease Cas2.